A 359-amino-acid polypeptide reads, in one-letter code: Bergaptol O-methyltransferase (359 aa).

Position 126 (His126) interacts with bergaptol. Positions 179, 203, 226, 246, and 260 each coordinate S-adenosyl-L-homocysteine. Position 264 (His264) interacts with bergaptol. His264 (proton acceptor) is an active-site residue.

Belongs to the class I-like SAM-binding methyltransferase superfamily. Cation-independent O-methyltransferase family. COMT subfamily.

It carries out the reaction a 5-hydroxyfurocoumarin + S-adenosyl-L-methionine = a 5-methoxyfurocoumarin + S-adenosyl-L-homocysteine + H(+). The enzyme catalyses bergaptol + S-adenosyl-L-methionine = bergapten + S-adenosyl-L-homocysteine. With respect to regulation, inhibited by Cu(2+), Ni(2+) and Co(2+). This is Bergaptol O-methyltransferase from Glehnia littoralis (Beach silvertop).